Here is a 403-residue protein sequence, read N- to C-terminus: UPF0229 protein CKR_0568 (403 aa).

Residues 71 to 109 are disordered; it reads SSGVGSGDGSQKKGDRIGKAIKDRDGKGNQGAGNQEGED. The span at 80-97 shows a compositional bias: basic and acidic residues; that stretch reads SQKKGDRIGKAIKDRDGK.

This sequence belongs to the UPF0229 family.

This is UPF0229 protein CKR_0568 from Clostridium kluyveri (strain NBRC 12016).